The following is a 675-amino-acid chain: DNA ligase (675 aa).

NAD(+) is bound by residues 33-37, 82-83, and E114; these read DAEYD and SL. The N6-AMP-lysine intermediate role is filled by K116. Residues R137, E174, K291, and K315 each contribute to the NAD(+) site. Zn(2+)-binding residues include C409, C412, C427, and C433. One can recognise a BRCT domain in the interval 595-675; it reads AGDNPFAGKT…EMIRLLDQSK (81 aa).

It belongs to the NAD-dependent DNA ligase family. LigA subfamily. The cofactor is Mg(2+). Requires Mn(2+) as cofactor.

It carries out the reaction NAD(+) + (deoxyribonucleotide)n-3'-hydroxyl + 5'-phospho-(deoxyribonucleotide)m = (deoxyribonucleotide)n+m + AMP + beta-nicotinamide D-nucleotide.. Its function is as follows. DNA ligase that catalyzes the formation of phosphodiester linkages between 5'-phosphoryl and 3'-hydroxyl groups in double-stranded DNA using NAD as a coenzyme and as the energy source for the reaction. It is essential for DNA replication and repair of damaged DNA. The protein is DNA ligase of Proteus mirabilis (strain HI4320).